Reading from the N-terminus, the 500-residue chain is Glycerol kinase (500 aa).

Threonine 11 serves as a coordination point for ADP. Residues threonine 11, threonine 12, and serine 13 each contribute to the ATP site. Residue threonine 11 participates in sn-glycerol 3-phosphate binding. Arginine 15 contributes to the ADP binding site. 4 residues coordinate sn-glycerol 3-phosphate: arginine 81, glutamate 82, tyrosine 133, and aspartate 242. Residues arginine 81, glutamate 82, tyrosine 133, aspartate 242, and glutamine 243 each coordinate glycerol. ADP-binding residues include threonine 264 and glycine 307. ATP is bound by residues threonine 264, glycine 307, glutamine 311, and glycine 411. Glycine 411 is an ADP binding site.

This sequence belongs to the FGGY kinase family.

It catalyses the reaction glycerol + ATP = sn-glycerol 3-phosphate + ADP + H(+). Its pathway is polyol metabolism; glycerol degradation via glycerol kinase pathway; sn-glycerol 3-phosphate from glycerol: step 1/1. Its activity is regulated as follows. Inhibited by fructose 1,6-bisphosphate (FBP). Key enzyme in the regulation of glycerol uptake and metabolism. Catalyzes the phosphorylation of glycerol to yield sn-glycerol 3-phosphate. This Bradyrhizobium diazoefficiens (strain JCM 10833 / BCRC 13528 / IAM 13628 / NBRC 14792 / USDA 110) protein is Glycerol kinase.